Consider the following 299-residue polypeptide: Bifunctional protein FolD (299 aa).

NADP(+) contacts are provided by residues 168-170 (GRS), serine 193, and isoleucine 234.

Belongs to the tetrahydrofolate dehydrogenase/cyclohydrolase family. In terms of assembly, homodimer.

It carries out the reaction (6R)-5,10-methylene-5,6,7,8-tetrahydrofolate + NADP(+) = (6R)-5,10-methenyltetrahydrofolate + NADPH. It catalyses the reaction (6R)-5,10-methenyltetrahydrofolate + H2O = (6R)-10-formyltetrahydrofolate + H(+). The protein operates within one-carbon metabolism; tetrahydrofolate interconversion. Catalyzes the oxidation of 5,10-methylenetetrahydrofolate to 5,10-methenyltetrahydrofolate and then the hydrolysis of 5,10-methenyltetrahydrofolate to 10-formyltetrahydrofolate. The sequence is that of Bifunctional protein FolD from Bartonella bacilliformis (strain ATCC 35685 / KC583 / Herrer 020/F12,63).